A 347-amino-acid chain; its full sequence is GMP reductase (347 aa).

108 to 131 is a binding site for NADP(+); sequence ADFEKTKQILDLNPALNFVCIDVA. K(+) contacts are provided by Gly181 and Gly183. The active-site Thioimidate intermediate is Cys186. 216–239 provides a ligand contact to NADP(+); the sequence is IVSDGGCTTPGDVAKAFGGGADFV.

The protein belongs to the IMPDH/GMPR family. GuaC type 1 subfamily. In terms of assembly, homotetramer.

It catalyses the reaction IMP + NH4(+) + NADP(+) = GMP + NADPH + 2 H(+). Functionally, catalyzes the irreversible NADPH-dependent deamination of GMP to IMP. It functions in the conversion of nucleobase, nucleoside and nucleotide derivatives of G to A nucleotides, and in maintaining the intracellular balance of A and G nucleotides. The polypeptide is GMP reductase (Shigella dysenteriae serotype 1 (strain Sd197)).